We begin with the raw amino-acid sequence, 218 residues long: Adenylate kinase (218 aa).

An ATP-binding site is contributed by 10–15 (GAGKGT). An NMP region spans residues 30–59 (STGDMLRAAVKQGTPLGQEAKKVMDAGGLV). AMP is bound by residues T31, R36, 57–59 (GLV), 85–88 (GFPR), and Q92. Residues 122–159 (GRRVHPASGRSYHVRFNPPKQEGLDDVTGEPLVQRDDD) are LID. Residues R123 and 132–133 (SY) each bind ATP. Positions 156 and 167 each coordinate AMP. G203 is a binding site for ATP.

Belongs to the adenylate kinase family. As to quaternary structure, monomer.

Its subcellular location is the cytoplasm. The catalysed reaction is AMP + ATP = 2 ADP. Its pathway is purine metabolism; AMP biosynthesis via salvage pathway; AMP from ADP: step 1/1. Catalyzes the reversible transfer of the terminal phosphate group between ATP and AMP. Plays an important role in cellular energy homeostasis and in adenine nucleotide metabolism. The sequence is that of Adenylate kinase from Bordetella petrii (strain ATCC BAA-461 / DSM 12804 / CCUG 43448).